The sequence spans 182 residues: Succinate dehydrogenase cytochrome b560 subunit, mitochondrial (182 aa).

The chain crosses the membrane as a helical span at residues 65-94 (LTWMLSGFHRISGCVMAGTLLVGGIGFAVL). Residues 95–114 (PFDFTAFVDFIRSWNLPCAV) lie on the Mitochondrial intermembrane side of the membrane. Residues 115 to 139 (TAVFKYIIAFPIIFHTLNGIRFLGF) form a helical membrane-spanning segment. His129 provides a ligand contact to heme. Over 140-147 (DLAKGVNN) the chain is Mitochondrial matrix. A helical membrane pass occupies residues 148–169 (VGQIYKSGYLVSGLSAILALAI). Residues 170-172 (VFN) lie on the Mitochondrial intermembrane side of the membrane.

This sequence belongs to the cytochrome b560 family. As to quaternary structure, component of complex II composed of four subunits: a flavoprotein (FP), iron-sulfur protein (IP), and a cytochrome b560 composed of two integral membrane proteins. It depends on heme as a cofactor.

It is found in the mitochondrion inner membrane. It functions in the pathway carbohydrate metabolism; tricarboxylic acid cycle. In terms of biological role, membrane-anchoring subunit of succinate dehydrogenase (SDH) that is involved in complex II of the mitochondrial electron transport chain and is responsible for transferring electrons from succinate to ubiquinone (coenzyme Q). Mediates resistance to enteropathogenic E.coli infection. The chain is Succinate dehydrogenase cytochrome b560 subunit, mitochondrial (mev-1) from Caenorhabditis elegans.